The sequence spans 382 residues: D-galactonate dehydratase (382 aa).

Aspartate 183 serves as a coordination point for Mg(2+). Residue histidine 185 is the Proton donor of the active site. Mg(2+) is bound by residues glutamate 209 and glutamate 235. The active-site Proton acceptor is histidine 285.

Belongs to the mandelate racemase/muconate lactonizing enzyme family. GalD subfamily. Requires Mg(2+) as cofactor.

The catalysed reaction is D-galactonate = 2-dehydro-3-deoxy-D-galactonate + H2O. It functions in the pathway carbohydrate acid metabolism; D-galactonate degradation; D-glyceraldehyde 3-phosphate and pyruvate from D-galactonate: step 1/3. Catalyzes the dehydration of D-galactonate to 2-keto-3-deoxy-D-galactonate. The polypeptide is D-galactonate dehydratase (Escherichia coli (strain 55989 / EAEC)).